We begin with the raw amino-acid sequence, 323 residues long: Protein translocase subunit SecF (323 aa).

The next 6 membrane-spanning stretches (helical) occupy residues 19–39, 138–158, 162–182, 189–209, 244–264, and 269–289; these read GVIV…FKGF, ILSL…RYEW, LASV…VIVF, EVIA…IIIF, LTVF…IIGF, and LIGT…VALL.

It belongs to the SecD/SecF family. SecF subfamily. Forms a complex with SecD. Part of the essential Sec protein translocation apparatus which comprises SecA, SecYEG and auxiliary proteins SecDF-YajC and YidC.

Its subcellular location is the cell inner membrane. Its function is as follows. Part of the Sec protein translocase complex. Interacts with the SecYEG preprotein conducting channel. SecDF uses the proton motive force (PMF) to complete protein translocation after the ATP-dependent function of SecA. The protein is Protein translocase subunit SecF of Helicobacter pylori (strain ATCC 700392 / 26695) (Campylobacter pylori).